Consider the following 372-residue polypeptide: Cytochrome b (372 aa).

4 helical membrane passes run 25–45, 69–90, 105–125, and 170–190; these read FGSM…FLSM, WMMQ…YIHV, WLSG…GYVL, and FFAL…LHIM. Residues His75 and His89 each contribute to the heme b site. Residues His174 and His188 each coordinate heme b. His193 lines the a ubiquinone pocket. 4 helical membrane passes run 218–238, 280–300, 312–332, and 339–358; these read YKDL…ISFI, LGGA…PFTH, FMQL…WTAT, and YTMI…MSNP.

This sequence belongs to the cytochrome b family. The cytochrome bc1 complex contains 3 respiratory subunits (MT-CYB, CYC1 and UQCRFS1), 2 core proteins (UQCRC1 and UQCRC2) and probably 6 low-molecular weight proteins. It depends on heme b as a cofactor.

It is found in the mitochondrion inner membrane. Functionally, component of the ubiquinol-cytochrome c reductase complex (complex III or cytochrome b-c1 complex) that is part of the mitochondrial respiratory chain. The b-c1 complex mediates electron transfer from ubiquinol to cytochrome c. Contributes to the generation of a proton gradient across the mitochondrial membrane that is then used for ATP synthesis. The protein is Cytochrome b (MT-CYB) of Acrantophis dumerili (Dumeril's ground boa).